The following is a 224-amino-acid chain: Peptidyl-prolyl cis-trans isomerase FKBP3 (224 aa).

Residue Ala2 is modified to N-acetylalanine. Position 36 is a phosphoserine (Ser36). The disordered stretch occupies residues 88-118 (VKLSDDKPKDSKSEETLDEGPPKYTKSILKK). A compositionally biased stretch (basic and acidic residues) spans 89–102 (KLSDDKPKDSKSEE). N6-acetyllysine is present on Lys99. In terms of domain architecture, PPIase FKBP-type spans 128 to 224 (GDVVHCWYTG…IFEVELVDID (97 aa)). A Phosphoserine modification is found at Ser152. N6-acetyllysine is present on Lys170.

It belongs to the FKBP-type PPIase family.

The protein resides in the nucleus. It carries out the reaction [protein]-peptidylproline (omega=180) = [protein]-peptidylproline (omega=0). Inhibited preferentially by rapamycin over FK506. Its function is as follows. FK506- and rapamycin-binding proteins (FKBPs) constitute a family of receptors for the two immunosuppressants which inhibit T-cell proliferation by arresting two distinct cytoplasmic signal transmission pathways. PPIases accelerate the folding of proteins. The polypeptide is Peptidyl-prolyl cis-trans isomerase FKBP3 (Fkbp3) (Mus musculus (Mouse)).